Reading from the N-terminus, the 618-residue chain is Beta-xylosidase (618 aa).

Disordered regions lie at residues 76–100 and 463–509; these read ERDRYTTDESDSGSSERHSVQQEES and LEPQ…PPIQ.

The protein belongs to the glycosyl hydrolase 52 family.

It localises to the secreted. The enzyme catalyses Hydrolysis of (1-&gt;4)-beta-D-xylans, to remove successive D-xylose residues from the non-reducing termini.. The protein operates within glycan degradation; xylan degradation. This chain is Beta-xylosidase (xylA), found in Geobacillus stearothermophilus (Bacillus stearothermophilus).